A 383-amino-acid polypeptide reads, in one-letter code: MRLLSFKKSKIVSIGTELEFQIIDCSSLSLVSRSKELMRALKDMRYRDQIKPEITQSMIEINSSIHQSAKEMYDELLELQKILVETAASIDIAFCGGGTHPFQQWTMQKIFPSKRFKKKFNQYRYLSKRATVFGQHIHIGCPTGDDAIYLTHALARYVPHFIAISASSPFYLGINTNYCSSRSTIFNAFPLSGVIPYLRSWQEFSDYYRKMYRWKIIENMKDFYWDIRPKPELGTIEIRVCDTPLTLRKSILITAYIQALALYLLEERPVQLSHDLYYVYNYNRFQASRHGLEGELTVTDKDRPIPIMDDILETIKKIEQYINGLGNGEYIEELCSDVINKQNDSVLINKIYKQDGSFSKLVAAQCELWLSDSKDRKWMTQPS.

It belongs to the glutamate--cysteine ligase type 2 family. YbdK subfamily.

It carries out the reaction L-cysteine + L-glutamate + ATP = gamma-L-glutamyl-L-cysteine + ADP + phosphate + H(+). ATP-dependent carboxylate-amine ligase which exhibits weak glutamate--cysteine ligase activity. The protein is Putative glutamate--cysteine ligase 2-2 of Legionella pneumophila (strain Paris).